Here is a 765-residue protein sequence, read N- to C-terminus: MVKAISSNLGYPRLGEKREWKRALEKFWNGTITEEELLAETKALRLHALKKQQEKGIDLIPVGDFSFYDQVLDTSVTFGIIPKRFQHEGGNVSLNTYFDIARGKNDAVASEMTKWFNTNYHYIVPELADANPKLLNNRALYYYEEAKKELGIEGKPVLVGPITYLKLGKGSNAESFEVLLDKFIPAYIEILEELETAGVEWVQIDEPYLATSFEKKEIALFEKVYQSFQEAVPNLKIELQTYFESLDYYEEVVNLPVAAIGIDFVHDHGDSLQALKTYGFPQDKYLAAGVIDGRNVWRSNLDAKLALLTDIAHYVAKDKLIVQPSNSLLHVPVTKLSEPDLDEVILGGLSFADQKLDEIVILTKALTEGVESVAKELEEARKAVKVLNESSHRNNLEVQAAIANLKNVRVDRELVFAERIKLQHAWLNLPLFPTTTIGSFPQSPEVRKTRADWLKGNITDAEYNAFIEKETARWIKIQEELDIDVLVHGEFERTDMVEYFGQKLAGFQATKFGWVQSYGSRAVRPPLIYGDVAFTEEITVKESVYAQSLTKRPVKGMLTAPVTIINWSFVRDDVPESVVANQVGLALRKEVEALERNGIKVIQVDEPALREGLPLKQARWEKYLNDAVYSFKLTTASVQNDTQIHTHMCYSDFDDIIDTISALDADVISIETSRSHGEIISTFEEVTYDKEIGLGVYDIHSPRVPTVTEIQDNIRRALRAIDAKQFWINPDCGLKTRQEPETIAALQDMIKATKEVRAEYQVLEK.

Residues 18-21 and K114 each bind 5-methyltetrahydropteroyltri-L-glutamate; that span reads REWK. Residues 437–439 and E490 each bind L-homocysteine; that span reads IGS. L-methionine contacts are provided by residues 437–439 and E490; that span reads IGS. W567 is a binding site for 5-methyltetrahydropteroyltri-L-glutamate. Residue D605 participates in L-homocysteine binding. An L-methionine-binding site is contributed by D605. E611 serves as a coordination point for 5-methyltetrahydropteroyltri-L-glutamate. 3 residues coordinate Zn(2+): H647, C649, and E671. The active-site Proton donor is H700. Position 732 (C732) interacts with Zn(2+).

It belongs to the vitamin-B12 independent methionine synthase family. Requires Zn(2+) as cofactor.

The catalysed reaction is 5-methyltetrahydropteroyltri-L-glutamate + L-homocysteine = tetrahydropteroyltri-L-glutamate + L-methionine. It participates in amino-acid biosynthesis; L-methionine biosynthesis via de novo pathway; L-methionine from L-homocysteine (MetE route): step 1/1. Catalyzes the transfer of a methyl group from 5-methyltetrahydrofolate to homocysteine resulting in methionine formation. This is 5-methyltetrahydropteroyltriglutamate--homocysteine methyltransferase from Listeria welshimeri serovar 6b (strain ATCC 35897 / DSM 20650 / CCUG 15529 / CIP 8149 / NCTC 11857 / SLCC 5334 / V8).